A 227-amino-acid polypeptide reads, in one-letter code: Protein p26 (227 aa).

Self-associates.

It localises to the host cell junction. Its subcellular location is the host plasmodesma. This Lettuce infectious yellows virus (isolate United States/92) (LIYV) protein is Protein p26.